We begin with the raw amino-acid sequence, 377 residues long: 6-oxocyclohex-1-ene-1-carbonyl-CoA hydrolase (377 aa).

Belongs to the enoyl-CoA hydratase/isomerase family. As to quaternary structure, homotetramer.

It catalyses the reaction 6-oxocyclohex-1-ene-1-carbonyl-CoA + 2 H2O = 3-hydroxy-6-carboxyhexanoyl-CoA + H(+). It functions in the pathway aromatic compound metabolism; benzoyl-CoA degradation. Functionally, involved in the central benzoyl-CoA catabolism. Catalyzes the addition of one molecule of water to the double bond and the hydrolytic cleavage of C-C bond in the alicyclic ring, 6-oxocyclohex-1-ene-1-carbonyl-CoA (6-OCH-CoA) to yield 3-hydroxypimelyl-CoA. The polypeptide is 6-oxocyclohex-1-ene-1-carbonyl-CoA hydrolase (oah) (Thauera aromatica).